The following is a 588-amino-acid chain: Zinc finger protein 599 (588 aa).

The region spanning 9–80 is the KRAB domain; that stretch reads VSFEDVVVTF…KRGLSQSTCA (72 aa). C2H2-type zinc fingers lie at residues 199-221, 227-249, 255-277, 283-305, 311-333, 339-361, 367-389, 395-417, 423-445, 451-473, 479-501, 507-529, 535-557, and 563-585; these read YTCTECGKGFSKKWALVRHQQIH, YECNECGKACRYMADVIRHMRLH, YKCIECGKAFKRRFHLTEHQRIH, YECKECGKAFTHRSSFIQHNMTH, FLCKECGKAFYYSSSFAQHMRIH, YECGECGKAFTHRSTFIQHNVTH, FLCKECGKTFCLNSSFTQHMRIH, YECGECGKAFTHRSTFIRHKRTH, FECKECGKAFCDSSSLIQHMRIH, YECSECGKAFTHHSVFIRHNRTH, LECKECAKAFYYSSSFTRHMRIH, YVCRECGKAFTQPANFVRHNRIH, FECKECEKAFCDNFALTQHMRTH, and FECNECGKTFSHSSSFTHHRKIH.

It belongs to the krueppel C2H2-type zinc-finger protein family.

It is found in the nucleus. May be involved in transcriptional regulation. This Homo sapiens (Human) protein is Zinc finger protein 599 (ZNF599).